Consider the following 441-residue polypeptide: MFVVAAGLNHRTAPVAIREQLAFARHGLPPALCRLKEEAGVEGCVILSTCNRTEVYIACNQEEAGLKAAKNFLGRSCKLALADLEGYLYTLNTHHAVRHLFRVAAGLDSMILGEDQVLAQVAEAYQVARETGTTNNVLNTLWQQAIYAGKRVRTETRIDANTVSVSYAAVELARQVFHDELDGRTVLVIGAGKMSTLAARYLKDKGVTTVLVSNRSYDRAVALAATIGGQAVRLDALEDYLPRADIVISCTAASHYILHRDQVARAVAARPGVPLMLIDIAVPRDIEPAAGDLPGVKLYDIDDLQQVVLANLEERKKAARQAEGIIAAEAEAFFQWLGSLYVVPTIVALKEKAEAIKNAEVRRACNRLGQLTTREQKIITSMATTIVNQLLHDAIVNLKAAALTPRGHLYVEALQELFELRVDHTLPGPDMAVSVEGGRKY.

Substrate is bound by residues 49-52 (TCNR), Ser-109, 114-116 (EDQ), and Gln-120. Cys-50 acts as the Nucleophile in catalysis. Residue 190 to 195 (GAGKMS) coordinates NADP(+).

It belongs to the glutamyl-tRNA reductase family. As to quaternary structure, homodimer.

It catalyses the reaction (S)-4-amino-5-oxopentanoate + tRNA(Glu) + NADP(+) = L-glutamyl-tRNA(Glu) + NADPH + H(+). The protein operates within porphyrin-containing compound metabolism; protoporphyrin-IX biosynthesis; 5-aminolevulinate from L-glutamyl-tRNA(Glu): step 1/2. Functionally, catalyzes the NADPH-dependent reduction of glutamyl-tRNA(Glu) to glutamate 1-semialdehyde (GSA). The chain is Glutamyl-tRNA reductase from Moorella thermoacetica (strain ATCC 39073 / JCM 9320).